The following is a 318-amino-acid chain: Protein disulfide-isomerase MPD1 (318 aa).

The signal sequence occupies residues 1–21; that stretch reads MLFLNIIKLLLGLFIMNEVKA. A Thioredoxin domain is found at 22-158; that stretch reads QNFYDSDPHI…SLSRIRSYVK (137 aa). Asn-47 is a glycosylation site (N-linked (GlcNAc...) asparagine). Cys-59 and Cys-62 are disulfide-bonded. An N-linked (GlcNAc...) asparagine glycan is attached at Asn-307. The short motif at 315–318 is the Prevents secretion from ER element; sequence HDEL.

Belongs to the protein disulfide isomerase family. Interacts with CNE1 and EPS1.

The protein resides in the endoplasmic reticulum lumen. It catalyses the reaction Catalyzes the rearrangement of -S-S- bonds in proteins.. Its function is as follows. Participates in the folding of proteins containing disulfide bonds. This is Protein disulfide-isomerase MPD1 (MPD1) from Saccharomyces cerevisiae (strain ATCC 204508 / S288c) (Baker's yeast).